A 516-amino-acid chain; its full sequence is Calcium and calcium/calmodulin-dependent serine/threonine-protein kinase (516 aa).

Residues 13 to 298 (YEVVDVLGRG…ASDLLRHPWV (286 aa)) form the Protein kinase domain. ATP is bound by residues 19–27 (LGRGGFSIV) and Lys-43. Residue Asp-163 is the Proton acceptor of the active site. Thr-263 bears the Phosphothreonine mark. Residues 321–334 (ARRKLRAAAIASVL) form a calmodulin-binding region. A coiled-coil region spans residues 343 to 363 (KRLRNLLGTHDLTSEELDNLR). 3 EF-hand domains span residues 392 to 427 (SLIP…LRNS), 428 to 463 (RGDD…LPEE), and 470 to 505 (TEPG…DSAL). Residues Asp-405, Asn-407, Asp-409, Thr-411, Glu-416, Asp-441, Asp-443, Ser-445, Cys-447, Glu-452, Asp-483, Asp-485, Asp-487, Lys-489, and Glu-494 each coordinate Ca(2+).

It belongs to the protein kinase superfamily. CAMK Ser/Thr protein kinase family. CaMK subfamily. Autophosphorylation. In terms of tissue distribution, mainly expressed in roots and panicles. Detected in leaves, shoots and culms.

The protein localises to the nucleus. It is found in the cytoplasm. The protein resides in the cell membrane. The catalysed reaction is L-seryl-[protein] + ATP = O-phospho-L-seryl-[protein] + ADP + H(+). It catalyses the reaction L-threonyl-[protein] + ATP = O-phospho-L-threonyl-[protein] + ADP + H(+). Calcium- and calmodulin-dependent protein kinase required for arbuscular mycorrhizal (AM) symbiosis. Involved in response to water deprivation stress. Required for abscisic acid-induced antioxidant defense and oxidative stress tolerance during dehydration stress. Functions upstream of MPK1 in an abscisic acid signaling pathway that regulates the activities of antioxidant enzymes and the production of hydrogen peroxide. This chain is Calcium and calcium/calmodulin-dependent serine/threonine-protein kinase (CCAMK), found in Oryza sativa subsp. japonica (Rice).